The following is a 210-amino-acid chain: Na(+)-translocating NADH-quinone reductase subunit D (210 aa).

Transmembrane regions (helical) follow at residues Ile10 to Ser30, Phe42 to Ile62, Ile72 to Ala92, Val103 to Met123, Phe131 to Phe151, and Asn178 to Ile198.

It belongs to the NqrDE/RnfAE family. Composed of six subunits; NqrA, NqrB, NqrC, NqrD, NqrE and NqrF.

Its subcellular location is the cell inner membrane. It carries out the reaction a ubiquinone + n Na(+)(in) + NADH + H(+) = a ubiquinol + n Na(+)(out) + NAD(+). NQR complex catalyzes the reduction of ubiquinone-1 to ubiquinol by two successive reactions, coupled with the transport of Na(+) ions from the cytoplasm to the periplasm. NqrA to NqrE are probably involved in the second step, the conversion of ubisemiquinone to ubiquinol. This chain is Na(+)-translocating NADH-quinone reductase subunit D, found in Photobacterium profundum (strain SS9).